The primary structure comprises 38 residues: L-amino-acid oxidase (38 aa).

The protein belongs to the flavin monoamine oxidase family. FIG1 subfamily. In terms of assembly, homodimer; non-covalently linked. FAD is required as a cofactor. Post-translationally, N-glycosylated. As to expression, expressed by the venom gland.

It localises to the secreted. The catalysed reaction is an L-alpha-amino acid + O2 + H2O = a 2-oxocarboxylate + H2O2 + NH4(+). It carries out the reaction L-leucine + O2 + H2O = 4-methyl-2-oxopentanoate + H2O2 + NH4(+). The enzyme catalyses L-phenylalanine + O2 + H2O = 3-phenylpyruvate + H2O2 + NH4(+). It catalyses the reaction L-tryptophan + O2 + H2O = indole-3-pyruvate + H2O2 + NH4(+). The catalysed reaction is L-methionine + O2 + H2O = 4-methylsulfanyl-2-oxobutanoate + H2O2 + NH4(+). It carries out the reaction L-arginine + O2 + H2O = 5-guanidino-2-oxopentanoate + H2O2 + NH4(+). The enzyme catalyses L-2-aminohexanoate + O2 + H2O = 2-oxohexanoate + H2O2 + NH4(+). It catalyses the reaction L-2-aminopentanoate + O2 + H2O = 2-oxopentanoate + H2O2 + NH4(+). The catalysed reaction is L-tyrosine + O2 + H2O = 3-(4-hydroxyphenyl)pyruvate + H2O2 + NH4(+). In terms of biological role, catalyzes an oxidative deamination of predominantly hydrophobic and aromatic L-amino acids, thus producing hydrogen peroxide that may contribute to the diverse toxic effects of this enzyme. Is very active against L-Phe and L-Tyr, moderately active against L-Trp, L-Met, L-Leu, L-norleucine (L-2-aminohexanoate), L-Arg and L-norvaline (L-2-aminopentanoate), and slightly active against L-His, L-cystine, and L-Ile. L-Gln, L-Lys, L-Asn, L-ornithine, L-Ala and L-Val are oxidized very slowly. Exhibits diverse biological activities, such as hemorrhage, hemolysis, edema, apoptosis of vascular endothelial cells or tumor cell lines, antibacterial and antiparasitic activities. This protein inhibits both agonist- and shear stress-induced platelet aggregation (SIPA). Effects of snake L-amino oxidases on platelets are controversial, since they either induce aggregation or inhibit agonist-induced aggregation. These different effects are probably due to different experimental conditions. The chain is L-amino-acid oxidase from Naja kaouthia (Monocled cobra).